The sequence spans 244 residues: Eukaryotic translation initiation factor 6 (244 aa).

It belongs to the eIF-6 family. Monomer. Associates with the 60S ribosomal subunit.

The protein resides in the cytoplasm. The protein localises to the nucleus. It is found in the nucleolus. Binds to the 60S ribosomal subunit and prevents its association with the 40S ribosomal subunit to form the 80S initiation complex in the cytoplasm. May also be involved in ribosome biogenesis. The protein is Eukaryotic translation initiation factor 6 (eif6) of Dictyostelium discoideum (Social amoeba).